The primary structure comprises 240 residues: NADPH-flavin oxidoreductase (240 aa).

Residues 11-15 (HRSIR), Ser-39, 67-69 (QAY), 128-131 (YIGG), and 167-169 (KPR) each bind FMN.

The protein belongs to the flavin oxidoreductase frp family. In terms of assembly, homodimer.

The catalysed reaction is FMNH2 + NADP(+) = FMN + NADPH + 2 H(+). In terms of biological role, catalyzes the NADPH-dependent reduction of FMN to FMNH(2). Involved in bioluminescence by providing FMNH(2) to luciferase. This Vibrio harveyi (Beneckea harveyi) protein is NADPH-flavin oxidoreductase.